Here is a 467-residue protein sequence, read N- to C-terminus: Dimethylamine methyltransferase MtbB1 (467 aa).

A non-standard amino acid (pyrrolysine) is located at residue Pyl356.

Belongs to the dimethylamine methyltransferase family.

It carries out the reaction Co(I)-[dimethylamine-specific corrinoid protein] + dimethylamine + H(+) = methyl-Co(III)-[dimethylamine-specific corrinoid protein] + methylamine. The protein operates within one-carbon metabolism; methanogenesis from dimethylamine. Its function is as follows. Catalyzes the transfer of a methyl group from dimethylamine to the corrinoid cofactor of MtbC. The protein is Dimethylamine methyltransferase MtbB1 (mtbB1) of Methanosarcina acetivorans (strain ATCC 35395 / DSM 2834 / JCM 12185 / C2A).